We begin with the raw amino-acid sequence, 1155 residues long: uncharacterized protein (1155 aa).

Positions 1–19 (MKKNIFITSLLILLLLLSS) are cleaved as a signal peptide. Cys20 carries the N-palmitoyl cysteine lipid modification. A lipid anchor (S-diacylglycerol cysteine) is attached at Cys20. 4 helical membrane-spanning segments follow: residues 289–309 (ISVS…FLIG), 395–415 (LGFI…FLIF), 424–444 (ALIT…FMLF), and 459–479 (ISYA…SMII).

The protein belongs to the TrbL/VirB6 family.

It localises to the cell membrane. This is an uncharacterized protein from Rickettsia prowazekii (strain Madrid E).